The sequence spans 583 residues: MGFDYALVHLKYTIPPAVLLTWLYRPFFTKLDVYKVGYLVSIAVASTIPWDSYLIRTGIWSYPTHVIIGPKLCDIPLEEVFFFIIQTYNTSLLYLLLSRPTFQPVYLNTERGAARRQWRYMRLAGQVFFLALIAWGWRCIRHGGLGTYTGLILVWAGPFLLMLWSLAYQFILALPVTNTALPIFLPTLYLWVVDTLALRRGTWVISTGTKYGLHLWDGLEIEEALFFLATNALIVFGQLAFDNALAVLYTFPHLFTGPSLLPSPVLLMRALLTPCSKYHDARIKGLDEAVNRLKRKSRSFYLASATFPGPLRADLLLLYSFCRVADDLVDNASDADEARAWIAKMRKFLNNVYSDKLPQSVVHSQICDDFPPSTQSALLQLPATKLSPQPLEDLLHGFEMDLAFQQGPIIRTMEDLRVYSERVAGTVAQMCIQLIFYWYPSTLDTEEKNVIVAAGNSMGVALQYVNIARDIEVDAQIGRVYLPLNWLSEAGLSYDDVLKKPNQAQIQTLRKHLLNHAFSVYEKAKDSIERLPIEARGPIRVAVESYMEIGRILRSEQYQVKAGRATVPKSRRIMVAWRTLNSK.

Positions 1–243 (MGFDYALVHL…IVFGQLAFDN (243 aa)) are lycopene beta-cyclase. 7 helical membrane-spanning segments follow: residues 3–23 (FDYALVHLKYTIPPAVLLTWL), 35–55 (KVGYLVSIAVASTIPWDSYLI), 75–97 (IPLEEVFFFIIQTYNTSLLYLLL), 120–140 (YMRLAGQVFFLALIAWGWRCI), 151–171 (LILVWAGPFLLMLWSLAYQFI), 173–193 (ALPVTNTALPIFLPTLYLWVV), and 221–241 (IEEALFFLATNALIVFGQLAF). A phytoene synthase region spans residues 250–583 (TFPHLFTGPS…MVAWRTLNSK (334 aa)).

The protein in the N-terminal section; belongs to the lycopene beta-cyclase family. In the C-terminal section; belongs to the phytoene/squalene synthase family.

It is found in the membrane. It carries out the reaction all-trans-lycopene = gamma-carotene. It catalyses the reaction gamma-carotene = all-trans-beta-carotene. The enzyme catalyses 2 (2E,6E,10E)-geranylgeranyl diphosphate = 15-cis-phytoene + 2 diphosphate. It functions in the pathway carotenoid biosynthesis; beta-carotene biosynthesis. The protein operates within carotenoid biosynthesis; phytoene biosynthesis; all-trans-phytoene from geranylgeranyl diphosphate: step 1/1. In terms of biological role, bifunctional enzyme that catalyzes the reactions from geranylgeranyl diphosphate to phytoene (phytoene synthase) and lycopene to beta-carotene via the intermediate gamma-carotene (lycopene cyclase). The polypeptide is Bifunctional lycopene cyclase/phytoene synthase (Pyrenophora tritici-repentis (strain Pt-1C-BFP) (Wheat tan spot fungus)).